Reading from the N-terminus, the 268-residue chain is 4-hydroxy-tetrahydrodipicolinate reductase (268 aa).

NAD(+) is bound by residues 10-15 (GASGRM), Asp-36, 99-101 (GTT), and 123-126 (APNM). His-156 functions as the Proton donor/acceptor in the catalytic mechanism. A (S)-2,3,4,5-tetrahydrodipicolinate-binding site is contributed by His-157. Lys-160 acts as the Proton donor in catalysis. 166-167 (GT) lines the (S)-2,3,4,5-tetrahydrodipicolinate pocket.

This sequence belongs to the DapB family.

It is found in the cytoplasm. It carries out the reaction (S)-2,3,4,5-tetrahydrodipicolinate + NAD(+) + H2O = (2S,4S)-4-hydroxy-2,3,4,5-tetrahydrodipicolinate + NADH + H(+). The catalysed reaction is (S)-2,3,4,5-tetrahydrodipicolinate + NADP(+) + H2O = (2S,4S)-4-hydroxy-2,3,4,5-tetrahydrodipicolinate + NADPH + H(+). The protein operates within amino-acid biosynthesis; L-lysine biosynthesis via DAP pathway; (S)-tetrahydrodipicolinate from L-aspartate: step 4/4. Catalyzes the conversion of 4-hydroxy-tetrahydrodipicolinate (HTPA) to tetrahydrodipicolinate. This Herminiimonas arsenicoxydans protein is 4-hydroxy-tetrahydrodipicolinate reductase.